A 280-amino-acid chain; its full sequence is Eukaryotic translation initiation factor 3 subunit F-1 (280 aa).

In terms of domain architecture, MPN spans 8–138 (VRVHPVVLFQ…LRSYVCIQLG (131 aa)).

It belongs to the eIF-3 subunit F family. As to quaternary structure, component of the eukaryotic translation initiation factor 3 (eIF-3) complex. The eIF-3 complex interacts with pix.

The protein localises to the cytoplasm. Its function is as follows. Component of the eukaryotic translation initiation factor 3 (eIF-3) complex, which is involved in protein synthesis of a specialized repertoire of mRNAs and, together with other initiation factors, stimulates binding of mRNA and methionyl-tRNAi to the 40S ribosome. The eIF-3 complex specifically targets and initiates translation of a subset of mRNAs involved in cell proliferation. This is Eukaryotic translation initiation factor 3 subunit F-1 from Drosophila persimilis (Fruit fly).